A 215-amino-acid chain; its full sequence is Cytidylate kinase (215 aa).

10–18 contacts ATP; that stretch reads GPAAAGKST.

The protein belongs to the cytidylate kinase family. Type 1 subfamily.

It is found in the cytoplasm. The catalysed reaction is CMP + ATP = CDP + ADP. It catalyses the reaction dCMP + ATP = dCDP + ADP. This Staphylococcus epidermidis (strain ATCC 35984 / DSM 28319 / BCRC 17069 / CCUG 31568 / BM 3577 / RP62A) protein is Cytidylate kinase.